Consider the following 514-residue polypeptide: NAD(P)H-quinone oxidoreductase subunit 2 (514 aa).

The next 14 helical transmembrane spans lie at 16–36, 43–63, 80–100, 110–130, 133–153, 168–188, 211–231, 245–265, 279–299, 307–327, 335–355, 379–399, 411–431, and 467–487; these read IWPE…DLIV, WLPY…YFEW, LSIV…LMSV, LAEF…LSGA, LVMI…MTGY, LLIG…LYGL, LGLA…ISAV, PTPV…ALAI, WHFI…VVAL, MLAY…TANS, IFYL…IILF, LGLS…GFFG, GLYG…YYYI, and VGLV…NPLF.

The protein belongs to the complex I subunit 2 family. In terms of assembly, NDH-1 can be composed of about 15 different subunits; different subcomplexes with different compositions have been identified which probably have different functions.

Its subcellular location is the cellular thylakoid membrane. It carries out the reaction a plastoquinone + NADH + (n+1) H(+)(in) = a plastoquinol + NAD(+) + n H(+)(out). The enzyme catalyses a plastoquinone + NADPH + (n+1) H(+)(in) = a plastoquinol + NADP(+) + n H(+)(out). In terms of biological role, NDH-1 shuttles electrons from an unknown electron donor, via FMN and iron-sulfur (Fe-S) centers, to quinones in the respiratory and/or the photosynthetic chain. The immediate electron acceptor for the enzyme in this species is believed to be plastoquinone. Couples the redox reaction to proton translocation, and thus conserves the redox energy in a proton gradient. Cyanobacterial NDH-1 also plays a role in inorganic carbon-concentration. This chain is NAD(P)H-quinone oxidoreductase subunit 2, found in Gloeothece citriformis (strain PCC 7424) (Cyanothece sp. (strain PCC 7424)).